Here is a 737-residue protein sequence, read N- to C-terminus: Probable serine/threonine-protein kinase DDB_G0269628 (737 aa).

A Protein kinase domain is found at 8–488; it reads YKLIKDLRSG…TLQKMDTSLL (481 aa). ATP is bound by residues 14–22 and Lys36; that span reads LRSGGEGKA. 2 disordered regions span residues 155–251 and 278–298; these read NTIQ…KKCS and TTAATTTTTTNTTHSSSSSSN. Residues 156–167 show a composition bias toward polar residues; that stretch reads TIQHSHSSSSLV. The segment covering 168–229 has biased composition (low complexity); that stretch reads NGTTSPTNAT…PSSPSSPLSP (62 aa). Asp349 acts as the Proton acceptor in catalysis.

Belongs to the protein kinase superfamily. NEK Ser/Thr protein kinase family. NIMA subfamily.

It carries out the reaction L-seryl-[protein] + ATP = O-phospho-L-seryl-[protein] + ADP + H(+). The catalysed reaction is L-threonyl-[protein] + ATP = O-phospho-L-threonyl-[protein] + ADP + H(+). In Dictyostelium discoideum (Social amoeba), this protein is Probable serine/threonine-protein kinase DDB_G0269628.